The chain runs to 193 residues: MQSVKCVIVGDGAVGKTCLLVSYTTNAFPTEYVPTVFDNYSATVMVDSRPINLGLWDTAGQEDYDRIRPLSYPQTDVFLLCFSVVSPPSFENISSKWKPEVSHHCPNAPCLLIGTKIDIRDEQTQTNKTCDKKIEPITSEQGEAKCKDIGALKYIECSALTQKNLRYVFDEAVRAVININKKEKIKRKSCLIF.

Positions 13, 15, 16, 17, 18, 32, 35, 60, 116, 118, and 159 each coordinate GTP. Threonine 17 is a Mg(2+) binding site. 2 short sequence motifs (switch) span residues 26–37 and 57–75; these read NAFPTEYVPTVF and DTAG…YPQT. A Mg(2+)-binding site is contributed by threonine 35. Residue cysteine 190 is modified to Cysteine methyl ester. Residue cysteine 190 is the site of S-geranylgeranyl cysteine attachment. Residues 191–193 constitute a propeptide, removed in mature form; that stretch reads LIF.

The protein belongs to the small GTPase superfamily. Rho family. Requires Mg(2+) as cofactor.

The protein resides in the cell membrane. The protein localises to the cytoplasm. It is found in the cytoskeleton. It catalyses the reaction GTP + H2O = GDP + phosphate + H(+). Regulated by guanine nucleotide exchange factors (GEFs) which promote the exchange of bound GDP for free GTP, GTPase activating proteins (GAPs) which increase the GTP hydrolysis activity, and GDP dissociation inhibitors which inhibit the dissociation of the nucleotide from the GTPase. Small GTPase which cycles between active GTP-bound and inactive GDP-bound states. In Entamoeba histolytica (strain ATCC 30459 / HM-1:IMSS / ABRM), this protein is Rho-related protein racB.